The sequence spans 201 residues: Orotate phosphoribosyltransferase (201 aa).

Residue 113–121 participates in 5-phospho-alpha-D-ribose 1-diphosphate binding; it reads EDIITTGKS. Residues threonine 117 and arginine 145 each contribute to the orotate site.

Belongs to the purine/pyrimidine phosphoribosyltransferase family. PyrE subfamily. As to quaternary structure, homodimer. Mg(2+) serves as cofactor.

The enzyme catalyses orotidine 5'-phosphate + diphosphate = orotate + 5-phospho-alpha-D-ribose 1-diphosphate. It functions in the pathway pyrimidine metabolism; UMP biosynthesis via de novo pathway; UMP from orotate: step 1/2. In terms of biological role, catalyzes the transfer of a ribosyl phosphate group from 5-phosphoribose 1-diphosphate to orotate, leading to the formation of orotidine monophosphate (OMP). This Helicobacter pylori (strain ATCC 700392 / 26695) (Campylobacter pylori) protein is Orotate phosphoribosyltransferase.